We begin with the raw amino-acid sequence, 389 residues long: cAMP-dependent protein kinase regulatory subunit (389 aa).

Disordered regions lie at residues 1–57 (MSEN…KFAG) and 87–110 (SVSA…PPYH). The dimerization and phosphorylation stretch occupies residues 1-128 (MSENTFPGRL…RLKKSISGNF (128 aa)). Positions 21 to 31 (AANTEKPSTSH) are enriched in polar residues. Basic and acidic residues predominate over residues 34–43 (RVTERDEDKV). S87 carries the phosphoserine modification. Over residues 87–105 (SVSAESLNPNPTASSNESW) the composition is skewed to polar residues. Residues 129–258 (LFNH…FLEE), E207, R216, 261–377 (LLST…GVEE), E327, and R336 each bind 3',5'-cyclic AMP.

This sequence belongs to the cAMP-dependent kinase regulatory chain family. Tetramer, composed of 2 regulatory (R) and 2 catalytic (C) subunits. In the presence of cAMP it dissociates into 2 active monomeric C subunits and an R dimer.

In Blumeria graminis (Powdery mildew), this protein is cAMP-dependent protein kinase regulatory subunit (pkar).